Consider the following 735-residue polypeptide: MSGFDDLGIYYSDSFGGEQPVGDDGQAKKSQLKKRFREFLRQYRVGTDRTGFTFKYRDELKRHYNLGEYWIEVEMEDLASFDEDLADYLYKQPTEHLQLLEEAAQEVADEVTRPRPAGEETIQEIQVMLRSDANPANIRNLKSEQMSHLVKIPGIIIAATAVRAKATKISIQCRSCRNTIGNIAVRPGLEGYAMPRKCNTEQAGRPKCPLDPYFIIPDKCKCVDFQTLKLQESPDAVPHGELPRHMQLYCDRYLCDKVVPGNRVTIMGIYSIQKSGKTSTKGRDRVGVGIRSSYIRVVGIQVDTEGTGRSAAGTITPQEEEEFRRLAVKPDIYETVAKSIAPSIYGSTDIKKAIACLLFGGSRKRLPDGLTRRGDVNLLMLGDPGTAKSQLLKFVERCSPIGVYTSGKGSSAAGLTASVMRDPVSRNFIMEGGAMVLADGGVVCIDEFDKMREDDRVAIHEAMEQQTISIAKAGITTTLNSRCSVLAAANSVYGRWDDTKGEENIDFMPTILSRFDMIFIVKDEHNEQRDMTLAKHVMNVHLSARTQSSSVEGEVDLNTLKKFIAYCRAKCGPRLSAEAAEKLKNRYILMRSGARDHERETEKRSSIPITVRQLEAVVRISESLGKMKLQPFVTETDVEEALRLFQVSTLDAAMSGSLSGVEGFSTQEDQEMLSRIEKQLKRRFAIGSQVSEHSIIQDFLKQKYPEHAIHKVLNLMMRRGEIHHRLQRKVLYRLK.

The MCM domain maps to 332–538; the sequence is IYETVAKSIA…RDMTLAKHVM (207 aa). Residue Arg372 participates in ADP binding. The Arginine finger motif lies at 513-516; it reads SRFD.

It belongs to the MCM family. As to quaternary structure, component of the mcm2-7 complex (RLF-M). The complex forms a toroidal hexameric ring with the proposed subunit order mcm2-mcm6-mcm4-mcm7-mcm3-mcm5. The heterodimer of mmcm3/mcm5 interacts with mcm4, mmcm6, mcm7 and weakly with mcm2. Component of the CMG helicase complex, composed of the mcm2-7 complex, the GINS complex and cdc45.

It is found in the nucleus. The protein resides in the chromosome. The catalysed reaction is ATP + H2O = ADP + phosphate + H(+). Functionally, acts as a component of the MCM2-7 complex (MCM complex) which is the replicative helicase essential for 'once per cell cycle' DNA replication initiation and elongation in eukaryotic cells. Core component of CDC45-MCM-GINS (CMG) helicase, the molecular machine that unwinds template DNA during replication, and around which the replisome is built. The active ATPase sites in the MCM2-7 ring are formed through the interaction surfaces of two neighboring subunits such that a critical structure of a conserved arginine finger motif is provided in trans relative to the ATP-binding site of the Walker A box of the adjacent subunit. The six ATPase active sites, however, are likely to contribute differentially to the complex helicase activity. The sequence is that of DNA replication licensing factor mcm5-B (mcm5-b) from Xenopus laevis (African clawed frog).